Here is a 181-residue protein sequence, read N- to C-terminus: Terminase small subunit (181 aa).

The winged helix-turn-helix (wHTH) stretch occupies residues 1 to 29 (MEVNKKQLADIFGASIRTIQNWQEQGMPV). 31–36 (RGGGKG) contributes to the ATP binding site. Residues 52 to 109 (ERDAEIENEKLRREVEELRQASEADLQPGTIEYERHRLTRAQADAQELKNARDSAEVV) adopt a coiled-coil conformation. The tract at residues 110–140 (ETAFCTFVLSRIAGEIASILDGLPLSVQRRF) is self-assembly. A binding to terminase large subunit region spans residues 141–180 (PELENRHVDFLKRDIIKAMNKAAALDELIPGLLSEYIEQS).

Belongs to the terminase small subunit family. As to quaternary structure, homodimer. Heterotrimer of two small and one large terminase subunits. The catalytically competent terminase is composed of a tetramer of heterotrimers. The tetramer forms a ring structure large enough to encircle duplex DNA. Host IHFA/IHFB induces bending of viral DNA to facilitate the assembly of the terminase tetramer of heterotrimers. Interacts (via C-terminus) with the terminase large subunit (via N-terminus).

It is found in the host cytoplasm. The enzyme catalyses ATP + H2O = ADP + phosphate + H(+). Functionally, the small subunit is responsible for the binding to multiple recognition elements within the packaging initiation site cos. The terminase lies at a unique vertex of the procapsid and is composed of two subunits, a small terminase subunit involved in viral DNA recognition (binding to packaging sequence cos), and a large terminase subunit possessing endonucleolytic and ATPase activities (DNA maturation and packaging). The terminase binds, cooperatively with the host factor IHFA/IHFB, to the cos site at the junction of adjacent viral genomes in the concatemeric DNA. The endonuclease activity of the large subunit cleave the viral DNA generating 5'overhangs of 12 bp in length. The terminase remains bound to the left end of the genome to be packaged, forming a stable DNA-terminase complex. In a reaction facilitated by the viral assembly catalyst gpFI, the DNA-terminase complex binds to the portal of the procapsid and the terminase packages the viral DNA into the procapsid until the next cos site on the concatemer reaches the complex ('unit length' packaging). The downstream cos site is then cut generating the mature right end of the genome, the heterotrimer undocks from the DNA-filled head and remains bound to the left end of concatemer's next genome. The protein is Terminase small subunit (Nu1) of Escherichia phage lambda (Bacteriophage lambda).